Here is a 336-residue protein sequence, read N- to C-terminus: Transmembrane protein 19 (336 aa).

The next 6 membrane-spanning stretches (helical) occupy residues 15-35 (MITN…FWII), 49-69 (ISPW…SNGL), 84-104 (VVGF…LMFF), 218-238 (VTVV…IAYF), 257-277 (IIAF…YLGA), and 313-333 (VNLF…WGFW).

Belongs to the TMEM19 family.

The protein localises to the membrane. This chain is Transmembrane protein 19 (TMEM19), found in Homo sapiens (Human).